Consider the following 451-residue polypeptide: Adenylyltransferase and sulfurtransferase MOCS3-2 (451 aa).

Residues 42–62 (GEDSDEAEESSNDMPTPQTKL) are disordered. Positions 43–52 (EDSDEAEESS) are enriched in acidic residues. A Phosphothreonine modification is found at Thr60. Residues Gly99, Asp120, 127–131 (SNLHR), Lys144, and 188–189 (DN) contribute to the ATP site. Zn(2+) is bound by residues Cys229 and Cys232. Cys246 acts as the Glycyl thioester intermediate; for adenylyltransferase activity in catalysis. Zn(2+) contacts are provided by Cys304 and Cys307. The Rhodanese domain occupies 353–449 (QSQPHLLLDV…WTGSVDATFP (97 aa)). Cys408 acts as the Cysteine persulfide intermediate; for sulfurtransferase activity in catalysis.

The protein in the N-terminal section; belongs to the HesA/MoeB/ThiF family. UBA4 subfamily. Requires Zn(2+) as cofactor.

The protein localises to the cytoplasm. The catalysed reaction is [molybdopterin-synthase sulfur-carrier protein]-C-terminal Gly-Gly + ATP + H(+) = [molybdopterin-synthase sulfur-carrier protein]-C-terminal Gly-Gly-AMP + diphosphate. The enzyme catalyses [molybdopterin-synthase sulfur-carrier protein]-C-terminal Gly-Gly-AMP + S-sulfanyl-L-cysteinyl-[cysteine desulfurase] + AH2 = [molybdopterin-synthase sulfur-carrier protein]-C-terminal-Gly-aminoethanethioate + L-cysteinyl-[cysteine desulfurase] + A + AMP + 2 H(+). The protein operates within tRNA modification; 5-methoxycarbonylmethyl-2-thiouridine-tRNA biosynthesis. It functions in the pathway cofactor biosynthesis; molybdopterin biosynthesis. Functionally, plays a central role in 2-thiolation of mcm(5)S(2)U at tRNA wobble positions of cytosolic tRNA(Lys), tRNA(Glu) and tRNA(Gln). Also essential during biosynthesis of the molybdenum cofactor. Acts by mediating the C-terminal thiocarboxylation of sulfur carriers URM1 and MOCS2A. Its N-terminus first activates URM1 and MOCS2A as acyl-adenylates (-COAMP), then the persulfide sulfur on the catalytic cysteine is transferred to URM1 and MOCS2A to form thiocarboxylation (-COSH) of their C-terminus. The reaction probably involves hydrogen sulfide that is generated from the persulfide intermediate and that acts as a nucleophile towards URM1 and MOCS2A. Subsequently, a transient disulfide bond is formed. Does not use thiosulfate as sulfur donor; NFS1 probably acting as a sulfur donor for thiocarboxylation reactions. The polypeptide is Adenylyltransferase and sulfurtransferase MOCS3-2 (Drosophila pseudoobscura pseudoobscura (Fruit fly)).